The primary structure comprises 327 residues: Serpentine receptor class gamma-2 (327 aa).

Transmembrane regions (helical) follow at residues 35 to 55 (LVQF…LYIL), 70 to 90 (ILFI…IFFA), 157 to 177 (MKYA…NIII), 181 to 203 (LPVY…ATMT), 244 to 264 (IASF…SLFA), and 277 to 297 (FLLP…MVMA).

It belongs to the nematode receptor-like protein srg family.

It is found in the membrane. This Caenorhabditis elegans protein is Serpentine receptor class gamma-2 (srg-2).